The following is a 164-amino-acid chain: Peptidyl-prolyl cis-trans isomerase A-like 4G (164 aa).

A PPIase cyclophilin-type domain is found at 7–163 (FFDITVDGKP…KKITIADCGQ (157 aa)).

Belongs to the cyclophilin-type PPIase family. PPIase A subfamily.

Its subcellular location is the cytoplasm. The enzyme catalyses [protein]-peptidylproline (omega=180) = [protein]-peptidylproline (omega=0). Functionally, PPIases accelerate the folding of proteins. It catalyzes the cis-trans isomerization of proline imidic peptide bonds in oligopeptides. The chain is Peptidyl-prolyl cis-trans isomerase A-like 4G (PPIAL4G) from Homo sapiens (Human).